The chain runs to 468 residues: Lysosomal dipeptide transporter MFSD1 (468 aa).

The tract at residues 1–25 is disordered; it reads MEDEEEEARALLPGGSDEAGRETRA. The Dileucine internalization motif motif lies at 11-12; the sequence is LL. The next 12 helical transmembrane spans lie at 42–62, 86–106, 116–136, 138–158, 173–194, 218–238, 270–290, 307–327, 334–354, 364–384, 395–415, and 421–441; these read LAHR…SYFC, LLYA…GFLI, TIIF…GGIF, AFWL…SLAV, LNLV…NMNL, LMIG…LAYL, WLIF…IGLV, AINS…GLLV, IIWV…LAFT, LLGL…AFVV, FMQS…GMIL, and LFLE…VVLL.

The protein belongs to the major facilitator superfamily. In terms of assembly, homodimer. Interacts with lysosomal protein GLMP (via lumenal domain); the interaction starts while both proteins are still in the endoplasmic reticulum and is required for stabilization of MFSD1 in lysosomes but has no direct effect on its targeting to lysosomes or transporter activity.

Its subcellular location is the lysosome membrane. It carries out the reaction L-alpha-aminoacyl-L-arginine(out) = L-alpha-aminoacyl-L-arginine(in). It catalyses the reaction L-arginyl-L-alpha-amino acid(out) = L-arginyl-L-alpha-amino acid(in). The catalysed reaction is L-arginyl-glycine(out) = L-arginyl-glycine(in). The enzyme catalyses L-alpha-aminoacyl-L-lysine(out) = L-alpha-aminoacyl-L-lysine(in). It carries out the reaction L-aspartyl-L-lysine(out) = L-aspartyl-L-lysine(in). It catalyses the reaction L-alanyl-L-lysine(out) = L-alanyl-L-lysine(in). The catalysed reaction is L-lysyl-L-alpha-amino acid(out) = L-lysyl-L-alpha-amino acid(in). The enzyme catalyses L-lysyl-L-alanine(out) = L-lysyl-L-alanine(in). It carries out the reaction L-lysyl-L-lysine(out) = L-lysyl-L-lysine(in). It catalyses the reaction L-lysyl-glycine(out) = L-lysyl-glycine(in). The catalysed reaction is L-alpha-aminoacyl-L-histidine(out) = L-alpha-aminoacyl-L-histidine(in). The enzyme catalyses L-histidyl-L-alpha-amino acid(out) = L-histidyl-L-alpha-amino acid(in). It carries out the reaction L-histidyl-glycine(out) = L-histidyl-glycine(in). Lysosomal dipeptide uniporter that selectively exports lysine, arginine or histidine-containing dipeptides with a net positive charge from the lysosome lumen into the cytosol. Could play a role in a specific type of protein O-glycosylation indirectly regulating macrophages migration and tissue invasion. Also essential for liver homeostasis. The protein is Lysosomal dipeptide transporter MFSD1 of Bos taurus (Bovine).